The primary structure comprises 106 residues: UPF0145 protein Dhaf_3855 (106 aa).

The protein belongs to the UPF0145 family.

The protein is UPF0145 protein Dhaf_3855 of Desulfitobacterium hafniense (strain DSM 10664 / DCB-2).